The primary structure comprises 132 residues: ATP synthase epsilon chain (132 aa).

The protein belongs to the ATPase epsilon chain family. F-type ATPases have 2 components, CF(1) - the catalytic core - and CF(0) - the membrane proton channel. CF(1) has five subunits: alpha(3), beta(3), gamma(1), delta(1), epsilon(1). CF(0) has three main subunits: a, b and c.

It is found in the cell membrane. In terms of biological role, produces ATP from ADP in the presence of a proton gradient across the membrane. The sequence is that of ATP synthase epsilon chain from Desulforamulus reducens (strain ATCC BAA-1160 / DSM 100696 / MI-1) (Desulfotomaculum reducens).